Consider the following 546-residue polypeptide: Immunoglobulin-like domain-containing receptor 1 (546 aa).

The N-terminal stretch at 1 to 23 is a signal peptide; it reads MAWPKLPAPWLLLCTWLPAGCLS. Residues 24 to 162 form the Ig-like V-type domain; sequence LLVTVQHTER…TSGDPDKEVK (139 aa). At 24–167 the chain is on the extracellular side; sequence LLVTVQHTER…DKEVKLIVLH (144 aa). Cysteines 45 and 145 form a disulfide. A helical membrane pass occupies residues 168–188; that stretch reads WLTVIFIILGALLLLLLIGVC. Residues 189 to 546 are Cytoplasmic-facing; the sequence is WCQCCPQYCC…SSHSGRSVVI (358 aa). The segment at 399 to 546 is disordered; it reads WSGRHRSSRL…SSHSGRSVVI (148 aa). Over residues 442–457 the composition is skewed to basic and acidic residues; sequence RCQERPRRPSPRESTQ. The span at 458–467 shows a compositional bias: basic residues; it reads RHGRRRRHRS. Serine 499 and serine 501 each carry phosphoserine. Residues 527-539 are compositionally biased toward basic and acidic residues; it reads GSVERRSEKDSSH.

This sequence belongs to the immunoglobulin superfamily. LISCH7 family. As to quaternary structure, homooligomer. Interacts with MARVELD2 and OCLN; the interaction is required to recruit MARVELD2 to tricellular contacts. Interacts (via C-terminus) with TRA2A, TRA2B and SRSF1. Interacts with PLSCR1.

The protein localises to the cell membrane. Its subcellular location is the cell junction. It is found in the tight junction. The protein resides in the nucleus. It localises to the cytoplasm. Its function is as follows. Maintains epithelial barrier function by recruiting MARVELD2/tricellulin to tricellular tight junctions (tTJs). Crucial for normal hearing by maintaining the structural and functional integrity of tTJs, which are critical for the survival of auditory neurosensory HCs. Mediates fatty acids and lipoproteins-stimulated CCK/cholecystokinin secretion in the small intestine. In the inner ear, may regulate alternative pre-mRNA splicing via binding to TRA2A, TRA2B and SRSF1. This chain is Immunoglobulin-like domain-containing receptor 1 (ILDR1), found in Pongo abelii (Sumatran orangutan).